The chain runs to 362 residues: Phosphoserine aminotransferase (362 aa).

2 residues coordinate L-glutamate: Ser9 and Arg42. Pyridoxal 5'-phosphate is bound by residues 76-77 (GR), Trp102, Thr153, Asp174, and Gln197. An N6-(pyridoxal phosphate)lysine modification is found at Lys198. 239–240 (NT) lines the pyridoxal 5'-phosphate pocket.

Belongs to the class-V pyridoxal-phosphate-dependent aminotransferase family. SerC subfamily. In terms of assembly, homodimer. Pyridoxal 5'-phosphate serves as cofactor.

Its subcellular location is the cytoplasm. It catalyses the reaction O-phospho-L-serine + 2-oxoglutarate = 3-phosphooxypyruvate + L-glutamate. The enzyme catalyses 4-(phosphooxy)-L-threonine + 2-oxoglutarate = (R)-3-hydroxy-2-oxo-4-phosphooxybutanoate + L-glutamate. It functions in the pathway amino-acid biosynthesis; L-serine biosynthesis; L-serine from 3-phospho-D-glycerate: step 2/3. It participates in cofactor biosynthesis; pyridoxine 5'-phosphate biosynthesis; pyridoxine 5'-phosphate from D-erythrose 4-phosphate: step 3/5. Catalyzes the reversible conversion of 3-phosphohydroxypyruvate to phosphoserine and of 3-hydroxy-2-oxo-4-phosphonooxybutanoate to phosphohydroxythreonine. The polypeptide is Phosphoserine aminotransferase (Escherichia coli O139:H28 (strain E24377A / ETEC)).